The following is a 144-amino-acid chain: Large ribosomal subunit protein uL13 (144 aa).

The protein belongs to the universal ribosomal protein uL13 family. As to quaternary structure, part of the 50S ribosomal subunit.

This protein is one of the early assembly proteins of the 50S ribosomal subunit, although it is not seen to bind rRNA by itself. It is important during the early stages of 50S assembly. The polypeptide is Large ribosomal subunit protein uL13 (Clostridium novyi (strain NT)).